We begin with the raw amino-acid sequence, 189 residues long: MGDKIFHNLSSKTLVATPHVITKGIYHKSLIYMLSHTEEGAIGLIFNRLVNHIDLKSFFKIKNDDITTPVMVPIYLGGPVEHEKGFFLHSSDYNKNLLLDFQNDLAVSSNLEISEDIAFGKGPKNSLFIVGYTAWKPGQLEEELERNLWLVMDCNKEFIFADNPEDKWHSALKHLGIDEIYFSAQIGNA.

The protein belongs to the UPF0301 (AlgH) family.

In Rickettsia akari (strain Hartford), this protein is UPF0301 protein A1C_00165.